A 393-amino-acid polypeptide reads, in one-letter code: Probable acetyl-CoA acyltransferase (393 aa).

Cys-88 serves as the catalytic Acyl-thioester intermediate. Residues His-349 and Cys-378 each act as proton acceptor in the active site.

The protein belongs to the thiolase-like superfamily. Thiolase family.

The protein localises to the cytoplasm. It catalyses the reaction 2 acetyl-CoA = acetoacetyl-CoA + CoA. The chain is Probable acetyl-CoA acyltransferase from Staphylococcus aureus (strain COL).